The following is a 340-amino-acid chain: Glyceraldehyde-3-phosphate dehydrogenase (340 aa).

NAD(+) contacts are provided by residues Ser-11 to Ile-12 and Gly-111. Residue Ser-140–Asn-142 coordinates D-glyceraldehyde 3-phosphate. The Nucleophile role is filled by Cys-141. Arg-169 lines the NAD(+) pocket. His-195–Gly-196 lines the D-glyceraldehyde 3-phosphate pocket. Residue Gln-303 participates in NAD(+) binding.

This sequence belongs to the glyceraldehyde-3-phosphate dehydrogenase family. As to quaternary structure, homotetramer.

It is found in the cytoplasm. It carries out the reaction D-glyceraldehyde 3-phosphate + phosphate + NADP(+) = (2R)-3-phospho-glyceroyl phosphate + NADPH + H(+). It catalyses the reaction D-glyceraldehyde 3-phosphate + phosphate + NAD(+) = (2R)-3-phospho-glyceroyl phosphate + NADH + H(+). It functions in the pathway carbohydrate degradation; glycolysis; pyruvate from D-glyceraldehyde 3-phosphate: step 1/5. In Methanococcus maripaludis (strain C6 / ATCC BAA-1332), this protein is Glyceraldehyde-3-phosphate dehydrogenase.